Consider the following 539-residue polypeptide: MSSIQCLNPKAELARHAAALELNISGARGLQDVMRSNLGPKGTLKMLVSGAGDIKLTKDGNVLLHEMAIQHPTASMIAKASTAQDDVTGDGTTSTVLLIGELLKQAESLVLEGLHPRIVTEGFEWANTKTLELLEKFKKEAPVERDLLVEVCRTALRTKLHQKLADHITECVVDAVLAIRRDGEEPDLHMVEKMEMHHDSDMDTTLVRGLVLDHGARHPDMPRHVKDAYILTCNVSLEYEKTEVNSGLFYKTAKEREALLAAEREFITRRVHKIIELKKKVIDNSPDGKNKGFVVINQKGIDPPSLDLLASEGILALRRAKRRNMERLQLAVGGEAVNSVDDLTPEDLGWAGLVYEHSLGEEKYTFIEECRAPKSVTLLIKGPNKHTITQIKDAIHDGLRAVFNTIVDKAVLPGAAAFEIAAYVMLKKDVENLKGRAKLGAEAFAQALLVIPKTLAVNGGYDAQETLVKLIEEKTAAGPDIAVGLDLETGGAVEPQGIWDNVTVKKNSISSATVLACNLLLVDEVMRAGMTNLKQPQPE.

Belongs to the TCP-1 chaperonin family. Heterooligomeric complex of about 850 to 900 kDa that forms two stacked rings, 12 to 16 nm in diameter.

It localises to the cytoplasm. In terms of biological role, molecular chaperone; assists the folding of proteins upon ATP hydrolysis. Known to play a role, in vitro, in the folding of actin and tubulin. This is T-complex protein 1 subunit zeta (cct-6) from Caenorhabditis elegans.